The chain runs to 579 residues: Moesin a (579 aa).

The FERM domain occupies 5 to 295 (ISVRVTTMDA…GNHELYMRRR (291 aa)). A coiled-coil region spans residues 306–448 (KAQAKEEKNH…EDEALEWQTK (143 aa)). Disordered stretches follow at residues 308 to 341 (QAKE…EKIE), 376 to 418 (EQER…EHLA), and 464 to 519 (KNKV…KNER). The segment covering 376 to 400 (EQERKRAQEEAERLERERRLAEEAK) has biased composition (basic and acidic residues). Residues 490-501 (AEASAELTSAAA) show a composition bias toward low complexity. Residues 502 to 519 (YKDRSEEERMTEAEKNER) show a composition bias toward basic and acidic residues. Residues 517–551 (NERVQKHLLALTSELANARDETKKTQNDIIHAENV) are a coiled coil.

The protein resides in the cell membrane. It is found in the cell junction. In terms of biological role, positively regulates endothelial adherens junction formation and stabilization. Is thereby required for intersegmental vessel luminal membrane formation and stabilization during tubulogenesis in the early stages of development, independent of blood flow dynamics. This is Moesin a from Danio rerio (Zebrafish).